The sequence spans 184 residues: UPF0316 protein BPUM_0594 (184 aa).

The next 3 helical transmembrane spans lie at 9-29, 41-61, and 67-87; these read AFTM…FSTM, AAAF…SIVL, and IQNV…GMKI.

Belongs to the UPF0316 family.

It localises to the cell membrane. The sequence is that of UPF0316 protein BPUM_0594 from Bacillus pumilus (strain SAFR-032).